The chain runs to 148 residues: Large ribosomal subunit protein bL9 (148 aa).

This sequence belongs to the bacterial ribosomal protein bL9 family.

Binds to the 23S rRNA. This is Large ribosomal subunit protein bL9 from Pseudomonas putida (strain GB-1).